The following is a 440-amino-acid chain: NADH-quinone oxidoreductase subunit D 1 (440 aa).

Belongs to the complex I 49 kDa subunit family. NDH-1 is composed of 14 different subunits. Subunits NuoB, C, D, E, F, and G constitute the peripheral sector of the complex.

The protein localises to the cell membrane. It carries out the reaction a quinone + NADH + 5 H(+)(in) = a quinol + NAD(+) + 4 H(+)(out). In terms of biological role, NDH-1 shuttles electrons from NADH, via FMN and iron-sulfur (Fe-S) centers, to quinones in the respiratory chain. The immediate electron acceptor for the enzyme in this species is believed to be a menaquinone. Couples the redox reaction to proton translocation (for every two electrons transferred, four hydrogen ions are translocated across the cytoplasmic membrane), and thus conserves the redox energy in a proton gradient. In Streptomyces griseus subsp. griseus (strain JCM 4626 / CBS 651.72 / NBRC 13350 / KCC S-0626 / ISP 5235), this protein is NADH-quinone oxidoreductase subunit D 1.